The sequence spans 191 residues: MEDQDAAFIKQATEAIVDVSLNIDNIDPIIKELLERVRNRQNRLQNKKPALIPAENGVDINSQGGNIKVKKENALPKPPKSSKSKPQDRRNSTGEKRFKCAKCSLEFSRSSDLRRHEKTHFAILPNICPQCGKGFARKDALKRHYDTLTCRRNRTKLLTAGGEGINELLKKVKQSNIVHRQDNNHNGSSNG.

The disordered stretch occupies residues 70 to 96 (KKENALPKPPKSSKSKPQDRRNSTGEK). Residues 85 to 96 (KPQDRRNSTGEK) are compositionally biased toward basic and acidic residues. The segment at 98–120 (FKCAKCSLEFSRSSDLRRHEKTH) adopts a C2H2-type 1 zinc-finger fold. The segment at 126 to 150 (NICPQCGKGFARKDALKRHYDTLTC) adopts a C2H2-type 2; atypical zinc-finger fold.

In terms of assembly, interacts with MET4 and MET28.

Its subcellular location is the cytoplasm. The protein localises to the nucleus. Auxiliary transcriptional regulator of sulfur amino acid metabolism. Involved in the transcriptional activation of MET28. This chain is Transcriptional regulator MET32 (MET32), found in Saccharomyces cerevisiae (strain ATCC 204508 / S288c) (Baker's yeast).